Reading from the N-terminus, the 224-residue chain is Response regulator protein GraR (224 aa).

In terms of domain architecture, Response regulatory spans 2-115; it reads QILLVEDDNT…VLIAKLQAIY (114 aa). Asp51 bears the 4-aspartylphosphate mark. Positions 126–224 form a DNA-binding region, ompR/PhoB-type; that stretch reads KRTLTWQDAV…KVGKGYMAHE (99 aa). Thr128, Thr130, and Thr149 each carry phosphothreonine.

Interacts with GraX. Phosphorylated by GraS. Phosphorylated by Stk1; phosphorylation increases the DNA-binding activity of GraR.

The protein resides in the cytoplasm. In terms of biological role, member of the two-component regulatory system GraR/GraS involved in resistance against cationic antimicrobial peptides (CAMPs). Upon phosphorylation by GraS, functions as a transcription regulator by direct binding to promoter regions of target genes such as adhesins, exoproteins, transporters, toxins, and proteins involved in cell wall synthesis. Down-regulates the expression of many genes involved in RNA and amino acid synthesis or glycolysis. In Staphylococcus aureus (strain USA300), this protein is Response regulator protein GraR (graR).